The primary structure comprises 648 residues: Cell surface glycoprotein MUC18 (648 aa).

An N-terminal signal peptide occupies residues 1–23 (MGLPRLVCAFLFAACCCCRSATG). 2 consecutive Ig-like V-type domains span residues 24–131 (VPGE…HYVQ) and 141–244 (PTIQ…KEVT). Topologically, residues 24-560 (VPGEEKQPTP…EKKLPQQESK (537 aa)) are extracellular. Cystine bridges form between cysteine 50–cysteine 118, cysteine 163–cysteine 225, cysteine 274–cysteine 322, cysteine 367–cysteine 409, and cysteine 454–cysteine 501. An N-linked (GlcNAc...) asparagine glycan is attached at asparagine 58. 3 Ig-like C2-type domains span residues 246 to 332 (PVLY…TTVM), 337 to 426 (PLEL…RRVS), and 432 to 512 (SPWM…SNTT). Residues 282–304 (PHFTINKKNPSTEEMEEESTDEN) form a disordered region. Asparagine 510 is a glycosylation site (N-linked (GlcNAc...) asparagine). Residues 527 to 549 (DSSQTTGLSTPTVSPHSRANSTS) are compositionally biased toward polar residues. Positions 527–554 (DSSQTTGLSTPTVSPHSRANSTSTEKKL) are disordered. The helical transmembrane segment at 561–581 (GVVIVAVIVCTLVLAVLGATL) threads the bilayer. Residues 582–648 (YYFYKKGKLP…QGEKYIDLRH (67 aa)) are Cytoplasmic-facing. Phosphoserine is present on residues serine 608 and serine 616. Residues 626-648 (LQGSNGDKRAPGDQGEKYIDLRH) form a disordered region. Residues 631-648 (GDKRAPGDQGEKYIDLRH) are compositionally biased toward basic and acidic residues.

In terms of tissue distribution, detected in lung, uterus and placenta (at protein level). Detected in heart, lung, kidney, adrenal gland, intestine, testis, skeletal muscle and aorta. Detected at low levels in adult brain, in particular in brain stem and spinal cord, but also in hippocampus, olfactory bulb and striatum (at protein level).

The protein resides in the cell membrane. The protein localises to the perikaryon. Its function is as follows. Plays a role in cell adhesion, and in cohesion of the endothelial monolayer at intercellular junctions in vascular tissue. Its expression may allow melanoma cells to interact with cellular elements of the vascular system, thereby enhancing hematogeneous tumor spread. Could be an adhesion molecule active in neural crest cells during embryonic development. Acts as a surface receptor that triggers tyrosine phosphorylation of FYN and PTK2/FAK1, and a transient increase in the intracellular calcium concentration. The polypeptide is Cell surface glycoprotein MUC18 (Mcam) (Rattus norvegicus (Rat)).